We begin with the raw amino-acid sequence, 278 residues long: Probable CCR4-associated factor 1 homolog 5 (278 aa).

Positions 30, 32, 145, and 217 each coordinate a divalent metal cation.

It belongs to the CAF1 family. In terms of assembly, component of the CCR4-NOT complex, at least composed of CRR4 and CAF1 proteins. Requires a divalent metal cation as cofactor.

The protein resides in the nucleus. Its subcellular location is the cytoplasm. The catalysed reaction is Exonucleolytic cleavage of poly(A) to 5'-AMP.. Functionally, ubiquitous transcription factor required for a diverse set of processes. It is a component of the CCR4 complex involved in the control of gene expression. This Arabidopsis thaliana (Mouse-ear cress) protein is Probable CCR4-associated factor 1 homolog 5 (CAF1-5).